Consider the following 144-residue polypeptide: Large ribosomal subunit protein uL16 (144 aa).

The protein belongs to the universal ribosomal protein uL16 family. As to quaternary structure, part of the 50S ribosomal subunit.

Its function is as follows. Binds 23S rRNA and is also seen to make contacts with the A and possibly P site tRNAs. This is Large ribosomal subunit protein uL16 from Bacillus cereus (strain ATCC 10987 / NRS 248).